Here is a 550-residue protein sequence, read N- to C-terminus: PAB1-binding protein 1 (550 aa).

The 85-residue stretch at 11 to 95 (RLEYLYLNLV…IVMIEVQNAK (85 aa)) folds into the Sm domain. Disordered regions lie at residues 201 to 296 (HDDE…HKRM) and 441 to 550 (GMGN…RVGK). Basic and acidic residues predominate over residues 214 to 223 (DVHRPQEKKP). A compositionally biased stretch (low complexity) spans 244 to 262 (AAAAPATAPTTAPAAAPAP). Positions 263–281 (AAAPPAAAPAAAAPPPPPA) are enriched in pro residues.

It belongs to the ataxin-2 family. As to quaternary structure, forms a complex composed of at least MKT1, PBP1, XAC1 and LSM12. Forms a complex composed of at least MKT1L, PBP1, XAC1 and LSM12. Within the complex, interacts with MKT1 (via C-terminus); the interaction is direct. Interacts (via C-terminus) with ZC3H11; the interaction is direct.

Its subcellular location is the cytoplasm. It is found in the cytosol. The protein localises to the stress granule. In terms of biological role, involved in post-transcriptional regulation of gene expression. Promotes mRNA stabilization by bridging poly(A)-binding protein to mRNAs. The sequence is that of PAB1-binding protein 1 from Trypanosoma brucei brucei (strain 927/4 GUTat10.1).